The following is a 258-amino-acid chain: MSFHLSTKERLLLLIDDIEMIAKELIEQAHQKISSTELVDLLDLLVAKDEEFRKMLELAEEQAKVEEAMDQLRAKVEVHDREIQKLQKSLKDAELILSTAIFQARQKLASINQANKRPVSSEELIKYAHRISSANAVSAPLTWCIGDLRRPYPTDIEMRNGLLGKSEQNINGGTVTHQNSGMPSEQQRTLSGSAGSGSGSGAGGEVPNAFQNQFNWNLGELHMTMGASGNTVALETRAQDDVEVMSTDSSSSSSSDSQ.

Residues 52-101 (FRKMLELAEEQAKVEEAMDQLRAKVEVHDREIQKLQKSLKDAELILSTAI) adopt a coiled-coil conformation. 2 disordered regions span residues 164–208 (GKSE…EVPN) and 234–258 (LETR…SDSQ). Residues 166–190 (SEQNINGGTVTHQNSGMPSEQQRTL) show a composition bias toward polar residues. Residues 194–204 (AGSGSGSGAGG) show a composition bias toward gly residues. Low complexity predominate over residues 246-258 (STDSSSSSSSDSQ).

It belongs to the Mediator complex subunit 4 family. As to quaternary structure, component of the Mediator complex, which includes at least MED4, MED6, MED14, MED17, MED18, MED20, MED21, MED23, MED24, MED27, MED30 and MED31. Interacts with MED10 and MED21.

The protein resides in the nucleus. In terms of biological role, component of the Mediator complex, a coactivator involved in the regulated transcription of nearly all RNA polymerase II-dependent genes. Mediator functions as a bridge to convey information from gene-specific regulatory proteins to the basal RNA polymerase II transcription machinery. Mediator is recruited to promoters by direct interactions with regulatory proteins and serves as a scaffold for the assembly of a functional preinitiation complex with RNA polymerase II and the general transcription factors. Required for activated transcription of the MtnA, MtnB and MtnD genes. This is Mediator of RNA polymerase II transcription subunit 4 (MED4) from Drosophila melanogaster (Fruit fly).